Reading from the N-terminus, the 526-residue chain is Glutamate--cysteine ligase (526 aa).

Belongs to the glutamate--cysteine ligase type 1 family. Type 1 subfamily.

The enzyme catalyses L-cysteine + L-glutamate + ATP = gamma-L-glutamyl-L-cysteine + ADP + phosphate + H(+). Its pathway is sulfur metabolism; glutathione biosynthesis; glutathione from L-cysteine and L-glutamate: step 1/2. The sequence is that of Glutamate--cysteine ligase from Proteus mirabilis (strain HI4320).